A 137-amino-acid polypeptide reads, in one-letter code: Probable 4-amino-4-deoxy-L-arabinose-phosphoundecaprenol flippase subunit ArnF (137 aa).

The next 3 helical transmembrane spans lie at 43 to 63 (AIAV…FWLL), 74 to 94 (YSLL…LPFF), and 98 to 118 (FTVS…TINL).

Belongs to the ArnF family. In terms of assembly, heterodimer of ArnE and ArnF.

It is found in the cell inner membrane. It functions in the pathway bacterial outer membrane biogenesis; lipopolysaccharide biosynthesis. In terms of biological role, translocates 4-amino-4-deoxy-L-arabinose-phosphoundecaprenol (alpha-L-Ara4N-phosphoundecaprenol) from the cytoplasmic to the periplasmic side of the inner membrane. This chain is Probable 4-amino-4-deoxy-L-arabinose-phosphoundecaprenol flippase subunit ArnF, found in Pseudomonas savastanoi pv. phaseolicola (strain 1448A / Race 6) (Pseudomonas syringae pv. phaseolicola (strain 1448A / Race 6)).